A 254-amino-acid chain; its full sequence is MSVSVERFGQGPDLVLLHGWGMNGAVWHGIAQQLAAHYRLHLVDLPGFGNSPLREGSDYSLPWLAEQIAIVLPQKCHLLGWSLGGLVASQLALTQPERLHSLITVASSPCFMARDEWPGIAPKVLTGFNQMLAGDFRQTIERFLAIQAMGSEHARDDIRQLRHWLAERPAPQFAALEAGLGLLADVDLRDELLQLSLPWLRVYGRLDSLVPKASIALLDERYPASHSVVLEKASHAPFISHPQQFVEIVRYFVG.

An AB hydrolase-1 domain is found at 14 to 242 (LVLLHGWGMN…ASHAPFISHP (229 aa)). Residues Trp-20, 82 to 83 (SL), and 143 to 147 (FLAIQ) each bind substrate. The active-site Nucleophile is Ser-82. Active-site residues include Asp-207 and His-235. His-235 contacts substrate.

The protein belongs to the AB hydrolase superfamily. Carboxylesterase BioH family. In terms of assembly, monomer.

Its subcellular location is the cytoplasm. It carries out the reaction 6-carboxyhexanoyl-[ACP] methyl ester + H2O = 6-carboxyhexanoyl-[ACP] + methanol + H(+). It functions in the pathway cofactor biosynthesis; biotin biosynthesis. Functionally, the physiological role of BioH is to remove the methyl group introduced by BioC when the pimeloyl moiety is complete. It allows to synthesize pimeloyl-ACP via the fatty acid synthetic pathway through the hydrolysis of the ester bonds of pimeloyl-ACP esters. The polypeptide is Pimeloyl-[acyl-carrier protein] methyl ester esterase (Aeromonas salmonicida (strain A449)).